A 496-amino-acid polypeptide reads, in one-letter code: tRNA-2-methylthio-N(6)-dimethylallyladenosine synthase (496 aa).

An MTTase N-terminal domain is found at 43–160; sequence KKVFVTTQGC…LPELYDQSHQ (118 aa). [4Fe-4S] cluster is bound by residues Cys52, Cys89, Cys123, Cys204, Cys208, and Cys211. The Radical SAM core domain maps to 190-422; that stretch reads RVEGFKAFVS…QKVIIDSTLA (233 aa). In terms of domain architecture, TRAM spans 425-493; the sequence is HEMVGTTTRV…PHMVKGEIEA (69 aa).

This sequence belongs to the methylthiotransferase family. MiaB subfamily. In terms of assembly, monomer. It depends on [4Fe-4S] cluster as a cofactor.

It localises to the cytoplasm. The catalysed reaction is N(6)-dimethylallyladenosine(37) in tRNA + (sulfur carrier)-SH + AH2 + 2 S-adenosyl-L-methionine = 2-methylsulfanyl-N(6)-dimethylallyladenosine(37) in tRNA + (sulfur carrier)-H + 5'-deoxyadenosine + L-methionine + A + S-adenosyl-L-homocysteine + 2 H(+). Catalyzes the methylthiolation of N6-(dimethylallyl)adenosine (i(6)A), leading to the formation of 2-methylthio-N6-(dimethylallyl)adenosine (ms(2)i(6)A) at position 37 in tRNAs that read codons beginning with uridine. This is tRNA-2-methylthio-N(6)-dimethylallyladenosine synthase from Psychrobacter arcticus (strain DSM 17307 / VKM B-2377 / 273-4).